The sequence spans 767 residues: Photosystem I P700 chlorophyll a apoprotein A1 (767 aa).

The next 8 helical transmembrane spans lie at 72 to 95 (IFSAHFGHLAVIFIWLSGAFFHGA), 158 to 181 (LMALAIGALVMAGLMLNAGVFHYH), 197 to 221 (LNHHLAGLLGLGSLSWAGHLIHVSA), 305 to 323 (IAHHHVAIAVLFIVAGHMY), 364 to 387 (WHAQLGLNLAMLGSLSIIVAQHMY), 403 to 429 (IGLFTHHMWIGGFLIVGGAAHAAIAMV), 451 to 473 (AIISHLNWVCIWLGAHSFGLYIH), and 548 to 566 (FMVHHIHAFTIHVTVLILL). Positions 590 and 599 each coordinate [4Fe-4S] cluster. The next 2 membrane-spanning stretches (helical) occupy residues 606–627 (HVFLGLFWMYNSLSIVIFHFSW) and 681–703 (TSAYGIMFLGAHFIWAFSLMFLF). His-692 lines the chlorophyll a' pocket. Met-700 and Tyr-708 together coordinate chlorophyll a. Trp-709 lines the phylloquinone pocket. Residues 741–761 (AVGVAHYLLGGIATTWAFFHA) form a helical membrane-spanning segment.

This sequence belongs to the PsaA/PsaB family. The PsaA/B heterodimer binds the P700 chlorophyll special pair and subsequent electron acceptors. PSI consists of a core antenna complex that captures photons, and an electron transfer chain that converts photonic excitation into a charge separation. The cyanobacterial PSI reaction center is composed of one copy each of PsaA,B,C,D,E,F,I,J,K,L,M and X, and forms trimeric complexes. Requires PSI electron transfer chain: 5 chlorophyll a, 1 chlorophyll a', 2 phylloquinones and 3 4Fe-4S clusters. PSI core antenna: 90 chlorophyll a, 22 carotenoids, 3 phospholipids and 1 galactolipid. P700 is a chlorophyll a/chlorophyll a' dimer, A0 is one or more chlorophyll a, A1 is one or both phylloquinones and FX is a shared 4Fe-4S iron-sulfur center. as cofactor.

The protein resides in the cellular thylakoid membrane. The enzyme catalyses reduced [plastocyanin] + hnu + oxidized [2Fe-2S]-[ferredoxin] = oxidized [plastocyanin] + reduced [2Fe-2S]-[ferredoxin]. PsaA and PsaB bind P700, the primary electron donor of photosystem I (PSI), as well as the electron acceptors A0, A1 and FX. PSI is a plastocyanin/cytochrome c6-ferredoxin oxidoreductase, converting photonic excitation into a charge separation, which transfers an electron from the donor P700 chlorophyll pair to the spectroscopically characterized acceptors A0, A1, FX, FA and FB in turn. Oxidized P700 is reduced on the lumenal side of the thylakoid membrane by plastocyanin or cytochrome c6. This is Photosystem I P700 chlorophyll a apoprotein A1 from Parasynechococcus marenigrum (strain WH8102).